The sequence spans 32 residues: MSDIN-like toxin proprotein 1 (32 aa).

The propeptide occupies 1 to 10 (MSDINATCLP). Residues 11–17 (AWLALCP) constitute a cross-link (cyclopeptide (Ala-Pro)). The propeptide occupies 18-32 (CVGDDVNPTLTRGGT).

This sequence belongs to the MSDIN fungal toxin family. Post-translationally, processed by the macrocyclase-peptidase enzyme POPB to yield a toxic cyclic heptapeptide. POPB first removes 10 residues from the N-terminus. Conformational trapping of the remaining peptide forces the enzyme to release this intermediate rather than proceed to macrocyclization. The enzyme rebinds the remaining peptide in a different conformation and catalyzes macrocyclization of the N-terminal 7 residues.

Probable toxin that belongs to the MSDIN-like toxin family responsible for a large number of food poisoning cases and deaths. This Amanita fuligineoides protein is MSDIN-like toxin proprotein 1.